The sequence spans 130 residues: Small ribosomal subunit protein uS9 (130 aa).

Positions 104–130 (LTRDPRMKERKKYGLKKARRAPQFSKR) are disordered. Positions 111-130 (KERKKYGLKKARRAPQFSKR) are enriched in basic residues.

The protein belongs to the universal ribosomal protein uS9 family.

This Ruminiclostridium cellulolyticum (strain ATCC 35319 / DSM 5812 / JCM 6584 / H10) (Clostridium cellulolyticum) protein is Small ribosomal subunit protein uS9.